Consider the following 336-residue polypeptide: Ketol-acid reductoisomerase (NADP(+)) 1 (336 aa).

The region spanning 2–181 is the KARI N-terminal Rossmann domain; it reads AKVYYEKDVT…GATRAGVLET (180 aa). Residues 25–28, Arg48, Ser52, and 82–85 each bind NADP(+); these read YGSQ and DELQ. Residue His107 is part of the active site. Gly133 is a binding site for NADP(+). A KARI C-terminal knotted domain is found at 182-327; it reads TFKEETETDL…RKLRGMMPFV (146 aa). Residues Asp190, Glu194, Glu226, and Glu230 each coordinate Mg(2+). Ser251 contributes to the substrate binding site.

Belongs to the ketol-acid reductoisomerase family. Mg(2+) serves as cofactor.

The enzyme catalyses (2R)-2,3-dihydroxy-3-methylbutanoate + NADP(+) = (2S)-2-acetolactate + NADPH + H(+). It catalyses the reaction (2R,3R)-2,3-dihydroxy-3-methylpentanoate + NADP(+) = (S)-2-ethyl-2-hydroxy-3-oxobutanoate + NADPH + H(+). Its pathway is amino-acid biosynthesis; L-isoleucine biosynthesis; L-isoleucine from 2-oxobutanoate: step 2/4. It participates in amino-acid biosynthesis; L-valine biosynthesis; L-valine from pyruvate: step 2/4. Its function is as follows. Involved in the biosynthesis of branched-chain amino acids (BCAA). Catalyzes an alkyl-migration followed by a ketol-acid reduction of (S)-2-acetolactate (S2AL) to yield (R)-2,3-dihydroxy-isovalerate. In the isomerase reaction, S2AL is rearranged via a Mg-dependent methyl migration to produce 3-hydroxy-3-methyl-2-ketobutyrate (HMKB). In the reductase reaction, this 2-ketoacid undergoes a metal-dependent reduction by NADPH to yield (R)-2,3-dihydroxy-isovalerate. The sequence is that of Ketol-acid reductoisomerase (NADP(+)) 1 from Bacillus anthracis.